A 264-amino-acid chain; its full sequence is Thymidylate synthase (264 aa).

R21 contacts dUMP. H51 provides a ligand contact to (6R)-5,10-methylene-5,6,7,8-tetrahydrofolate. 126-127 (RR) contributes to the dUMP binding site. The active-site Nucleophile is C146. Residues 166 to 169 (RSCD), N177, and 207 to 209 (HLY) each bind dUMP. Residue D169 coordinates (6R)-5,10-methylene-5,6,7,8-tetrahydrofolate. A263 is a binding site for (6R)-5,10-methylene-5,6,7,8-tetrahydrofolate.

The protein belongs to the thymidylate synthase family. Bacterial-type ThyA subfamily. Homodimer.

It is found in the cytoplasm. The enzyme catalyses dUMP + (6R)-5,10-methylene-5,6,7,8-tetrahydrofolate = 7,8-dihydrofolate + dTMP. Its pathway is pyrimidine metabolism; dTTP biosynthesis. Its function is as follows. Catalyzes the reductive methylation of 2'-deoxyuridine-5'-monophosphate (dUMP) to 2'-deoxythymidine-5'-monophosphate (dTMP) while utilizing 5,10-methylenetetrahydrofolate (mTHF) as the methyl donor and reductant in the reaction, yielding dihydrofolate (DHF) as a by-product. This enzymatic reaction provides an intracellular de novo source of dTMP, an essential precursor for DNA biosynthesis. The polypeptide is Thymidylate synthase (Shewanella amazonensis (strain ATCC BAA-1098 / SB2B)).